The primary structure comprises 339 residues: Glycerol-3-phosphate dehydrogenase [NAD(P)+] (339 aa).

Residues serine 31, tryptophan 32, arginine 52, and lysine 122 each contribute to the NADPH site. The sn-glycerol 3-phosphate site is built by lysine 122 and glycine 152. NADPH is bound at residue alanine 156. Sn-glycerol 3-phosphate-binding residues include lysine 207, aspartate 260, serine 270, arginine 271, and asparagine 272. Lysine 207 acts as the Proton acceptor in catalysis. Arginine 271 is a binding site for NADPH. NADPH is bound at residue glutamate 293.

It belongs to the NAD-dependent glycerol-3-phosphate dehydrogenase family.

It is found in the cytoplasm. The catalysed reaction is sn-glycerol 3-phosphate + NAD(+) = dihydroxyacetone phosphate + NADH + H(+). It carries out the reaction sn-glycerol 3-phosphate + NADP(+) = dihydroxyacetone phosphate + NADPH + H(+). Its pathway is membrane lipid metabolism; glycerophospholipid metabolism. Its function is as follows. Catalyzes the reduction of the glycolytic intermediate dihydroxyacetone phosphate (DHAP) to sn-glycerol 3-phosphate (G3P), the key precursor for phospholipid synthesis. This Tropheryma whipplei (strain Twist) (Whipple's bacillus) protein is Glycerol-3-phosphate dehydrogenase [NAD(P)+].